An 84-amino-acid polypeptide reads, in one-letter code: U4-theraphotoxin-Hhn1a (84 aa).

The signal sequence occupies residues 1-22 (MKVTLIAIPTCAAVLVLHTTAA). The propeptide occupies 23–47 (EELEESQLMEVGMPDTELAAVDEER). 3 cysteine pairs are disulfide-bonded: Cys-51-Cys-65, Cys-55-Cys-76, and Cys-70-Cys-81.

Belongs to the neurotoxin 12 (Hwtx-2) family. 02 (Hwtx-2) subfamily. Expressed by the venom gland.

The protein localises to the secreted. Its function is as follows. Postsynaptic neurotoxin. This Cyriopagopus hainanus (Chinese bird spider) protein is U4-theraphotoxin-Hhn1a.